The primary structure comprises 421 residues: Gamma-glutamyl phosphate reductase (421 aa).

Belongs to the gamma-glutamyl phosphate reductase family.

It is found in the cytoplasm. The enzyme catalyses L-glutamate 5-semialdehyde + phosphate + NADP(+) = L-glutamyl 5-phosphate + NADPH + H(+). It participates in amino-acid biosynthesis; L-proline biosynthesis; L-glutamate 5-semialdehyde from L-glutamate: step 2/2. Catalyzes the NADPH-dependent reduction of L-glutamate 5-phosphate into L-glutamate 5-semialdehyde and phosphate. The product spontaneously undergoes cyclization to form 1-pyrroline-5-carboxylate. The protein is Gamma-glutamyl phosphate reductase of Pseudomonas aeruginosa (strain UCBPP-PA14).